A 186-amino-acid chain; its full sequence is MYLSKIICKKVPMKLLCTRNAATVSAAATNALQKEQPSGEAMIARPRLVDLDKRWGIMSQEEKDGLITDLYARQKQPWTTLSIEEKKAAYWIAFGEHGPRAFSHISQKTVFWGTVAGLTIGVVLFGLIRTQAAPSPRTMTREWQEKSNEYMKENKINPISGEASEGFKGRGQISGGIFSPSEKDKK.

The transit peptide at Met-1–Asn-20 directs the protein to the mitochondrion. Topologically, residues Ala-21 to Gln-107 are mitochondrial matrix. Residues Lys-108–Ile-128 form a helical membrane-spanning segment. At Arg-129–Lys-186 the chain is on the mitochondrial intermembrane side. The disordered stretch occupies residues Glu-149–Lys-186.

The protein belongs to the cytochrome c oxidase IV family. As to quaternary structure, component of the cytochrome c oxidase (complex IV, CIV), a multisubunit enzyme composed of a catalytic core of 3 subunits and seevral supernumerary subunits. The complex exists as a monomer or a dimer and forms supercomplexes (SCs) in the inner mitochondrial membrane with ubiquinol-cytochrome c oxidoreductase (cytochrome b-c1 complex, complex III, CIII).

The protein localises to the mitochondrion inner membrane. It participates in energy metabolism; oxidative phosphorylation. Component of the cytochrome c oxidase, the last enzyme in the mitochondrial electron transport chain which drives oxidative phosphorylation. The respiratory chain contains 3 multisubunit complexes succinate dehydrogenase (complex II, CII), ubiquinol-cytochrome c oxidoreductase (cytochrome b-c1 complex, complex III, CIII) and cytochrome c oxidase (complex IV, CIV), that cooperate to transfer electrons derived from NADH and succinate to molecular oxygen, creating an electrochemical gradient over the inner membrane that drives transmembrane transport and the ATP synthase. Cytochrome c oxidase is the component of the respiratory chain that catalyzes the reduction of oxygen to water. Electrons originating from reduced cytochrome c in the intermembrane space (IMS) are transferred via the dinuclear copper A center (CU(A)) of subunit 2 and heme A of subunit 1 to the active site in subunit 1, a binuclear center (BNC) formed by heme A3 and copper B (CU(B)). The BNC reduces molecular oxygen to 2 water molecules using 4 electrons from cytochrome c in the IMS and 4 protons from the mitochondrial matrix. This chain is Cytochrome c oxidase polypeptide 5, mitochondrial (cox5), found in Schizosaccharomyces pombe (strain 972 / ATCC 24843) (Fission yeast).